The sequence spans 1465 residues: DNA polymerase III PolC-type (1465 aa).

An Exonuclease domain is found at 427-583 (YVVFDVETTG…YDAEATGRLL (157 aa)).

It belongs to the DNA polymerase type-C family. PolC subfamily.

It is found in the cytoplasm. The enzyme catalyses DNA(n) + a 2'-deoxyribonucleoside 5'-triphosphate = DNA(n+1) + diphosphate. In terms of biological role, required for replicative DNA synthesis. This DNA polymerase also exhibits 3' to 5' exonuclease activity. The chain is DNA polymerase III PolC-type from Streptococcus pyogenes serotype M6 (strain ATCC BAA-946 / MGAS10394).